A 361-amino-acid chain; its full sequence is Chorismate synthase (361 aa).

Residues arginine 48 and arginine 54 each contribute to the NADP(+) site. FMN contacts are provided by residues arginine 125–serine 127, asparagine 238–alanine 239, glycine 278, lysine 293–serine 297, and arginine 319.

Belongs to the chorismate synthase family. Homotetramer. The cofactor is FMNH2.

It carries out the reaction 5-O-(1-carboxyvinyl)-3-phosphoshikimate = chorismate + phosphate. It functions in the pathway metabolic intermediate biosynthesis; chorismate biosynthesis; chorismate from D-erythrose 4-phosphate and phosphoenolpyruvate: step 7/7. Functionally, catalyzes the anti-1,4-elimination of the C-3 phosphate and the C-6 proR hydrogen from 5-enolpyruvylshikimate-3-phosphate (EPSP) to yield chorismate, which is the branch point compound that serves as the starting substrate for the three terminal pathways of aromatic amino acid biosynthesis. This reaction introduces a second double bond into the aromatic ring system. The protein is Chorismate synthase of Pectobacterium carotovorum subsp. carotovorum (strain PC1).